Reading from the N-terminus, the 135-residue chain is Adult cuticle protein 1 (135 aa).

An N-terminal signal peptide occupies residues 1-19; sequence MKFAVAVIFTLALAMGVQS. 3 repeat units span residues 72 to 75, 78 to 81, and 128 to 131.

Detected in the epidermis underlying the head and thorax (including legs and wings), but not in the abdominal epidermis of newly eclosed flies.

In terms of biological role, component of the cuticle of the adult fruit fly. Could be involved in thickening of the hard adult cuticle. In Drosophila melanogaster (Fruit fly), this protein is Adult cuticle protein 1 (Acp1).